Consider the following 131-residue polypeptide: Large ribosomal subunit protein bL17 (131 aa).

It belongs to the bacterial ribosomal protein bL17 family. Part of the 50S ribosomal subunit. Contacts protein L32.

This chain is Large ribosomal subunit protein bL17, found in Oenococcus oeni (strain ATCC BAA-331 / PSU-1).